A 341-amino-acid chain; its full sequence is Probable galacturonosyltransferase-like 2 (341 aa).

Topologically, residues 1–4 (MHSK) are cytoplasmic. A helical; Signal-anchor for type II membrane protein transmembrane segment spans residues 5 to 22 (FILYLSILAVFTVSFAGG). Over 23–341 (ERFKEAPKFF…LESRFDLIES (319 aa)) the chain is Lumenal. N-linked (GlcNAc...) asparagine glycosylation is present at Asn-190.

Belongs to the glycosyltransferase 8 family.

It is found in the golgi apparatus membrane. Its pathway is glycan metabolism; pectin biosynthesis. Its function is as follows. May be involved in pectin and/or xylans biosynthesis in cell walls. The chain is Probable galacturonosyltransferase-like 2 (GATL2) from Arabidopsis thaliana (Mouse-ear cress).